A 169-amino-acid chain; its full sequence is Crossover junction endodeoxyribonuclease RuvC (169 aa).

Catalysis depends on residues Asp-7, Glu-67, and Asp-139. Asp-7, Glu-67, and Asp-139 together coordinate Mg(2+).

Belongs to the RuvC family. In terms of assembly, homodimer which binds Holliday junction (HJ) DNA. The HJ becomes 2-fold symmetrical on binding to RuvC with unstacked arms; it has a different conformation from HJ DNA in complex with RuvA. In the full resolvosome a probable DNA-RuvA(4)-RuvB(12)-RuvC(2) complex forms which resolves the HJ. The cofactor is Mg(2+).

Its subcellular location is the cytoplasm. The enzyme catalyses Endonucleolytic cleavage at a junction such as a reciprocal single-stranded crossover between two homologous DNA duplexes (Holliday junction).. Its function is as follows. The RuvA-RuvB-RuvC complex processes Holliday junction (HJ) DNA during genetic recombination and DNA repair. Endonuclease that resolves HJ intermediates. Cleaves cruciform DNA by making single-stranded nicks across the HJ at symmetrical positions within the homologous arms, yielding a 5'-phosphate and a 3'-hydroxyl group; requires a central core of homology in the junction. The consensus cleavage sequence is 5'-(A/T)TT(C/G)-3'. Cleavage occurs on the 3'-side of the TT dinucleotide at the point of strand exchange. HJ branch migration catalyzed by RuvA-RuvB allows RuvC to scan DNA until it finds its consensus sequence, where it cleaves and resolves the cruciform DNA. This is Crossover junction endodeoxyribonuclease RuvC from Rhodospirillum rubrum (strain ATCC 11170 / ATH 1.1.1 / DSM 467 / LMG 4362 / NCIMB 8255 / S1).